The chain runs to 1521 residues: Suppressor of Ty 6 homolog (1521 aa).

Positions 1–204 (MDFIDNQAEE…EGAEDDARDV (204 aa)) are disordered. Residues 26–41 (KKMKMAKDKLKKKKKV) are compositionally biased toward basic residues. The Nuclear localization signal motif lies at 26 to 42 (KKMKMAKDKLKKKKKVV). 2 stretches are compositionally biased toward acidic residues: residues 45-56 (SDEDEDDEDDEE) and 67-76 (ADEDDEEEDA). The segment covering 77–89 (RSEKSDRSRRSEI) has biased composition (basic and acidic residues). Residues 90-103 (NDELDDEDLDLIDE) show a composition bias toward acidic residues. Positions 127–149 (PIRRSNQDDDDLQSERGSDDGDK) are enriched in basic and acidic residues. The span at 167-177 (RSEDDFIEDDG) shows a compositional bias: acidic residues. The S1 motif domain maps to 1182–1251 (LNAGRPGGCV…EKFSILLSCK (70 aa)). Positions 1299 to 1388 (HPNFHNVSYE…IARFVLPMIQ (90 aa)) constitute an SH2 domain. The disordered stretch occupies residues 1490–1521 (GIRSSLSYRPTGRTGPPPSAPYQQPPQQQYYR). Over residues 1504–1513 (GPPPSAPYQQ) the composition is skewed to pro residues.

This sequence belongs to the SPT6 family. In terms of assembly, interacts with glp-1 and lin-12.

It localises to the nucleus. Functionally, histone H3-H4 chaperone that plays a role in maintenance of chromatin structure during RNA polymerase II transcription elongation. May be required for several aspects of morphogenesis of C.briggsae, including regulation of division in the germline and gut and specification of ventral-uterine precursor cell fate. This chain is Suppressor of Ty 6 homolog (emb-5), found in Caenorhabditis briggsae.